A 155-amino-acid chain; its full sequence is Putative pre-16S rRNA nuclease (155 aa).

Residues 136–155 form a disordered region; it reads DAERATSRPPGHPVEPRIGP.

The protein belongs to the YqgF nuclease family.

The protein resides in the cytoplasm. In terms of biological role, could be a nuclease involved in processing of the 5'-end of pre-16S rRNA. The chain is Putative pre-16S rRNA nuclease from Leifsonia xyli subsp. xyli (strain CTCB07).